A 237-amino-acid chain; its full sequence is Small ribosomal subunit protein uS17m (237 aa).

Belongs to the universal ribosomal protein uS17 family. Component of the mitochondrial small ribosomal subunit (mt-SSU). Mature yeast 74S mitochondrial ribosomes consist of a small (37S) and a large (54S) subunit. The 37S small subunit contains a 15S ribosomal RNA (15S mt-rRNA) and 34 different proteins. The 54S large subunit contains a 21S rRNA (21S mt-rRNA) and 46 different proteins.

It is found in the mitochondrion. Component of the mitochondrial ribosome (mitoribosome), a dedicated translation machinery responsible for the synthesis of mitochondrial genome-encoded proteins, including at least some of the essential transmembrane subunits of the mitochondrial respiratory chain. The mitoribosomes are attached to the mitochondrial inner membrane and translation products are cotranslationally integrated into the membrane. uS17m may have a meiosis-specific role as it accumulates during the middle stage of sporulation. The protein is Small ribosomal subunit protein uS17m (MRPS17) of Saccharomyces cerevisiae (strain ATCC 204508 / S288c) (Baker's yeast).